Consider the following 718-residue polypeptide: DNA ligase (718 aa).

Residues 44 to 48 (DADYD), 93 to 94 (SL), and glutamate 127 contribute to the NAD(+) site. Catalysis depends on lysine 129, which acts as the N6-AMP-lysine intermediate. Arginine 150, glutamate 186, lysine 302, and lysine 326 together coordinate NAD(+). Residues cysteine 432, cysteine 435, cysteine 456, and cysteine 462 each contribute to the Zn(2+) site. One can recognise a BRCT domain in the interval 640-718 (TAGSPVAGKT…EDEWLALISG (79 aa)).

The protein belongs to the NAD-dependent DNA ligase family. LigA subfamily. Requires Mg(2+) as cofactor. The cofactor is Mn(2+).

It carries out the reaction NAD(+) + (deoxyribonucleotide)n-3'-hydroxyl + 5'-phospho-(deoxyribonucleotide)m = (deoxyribonucleotide)n+m + AMP + beta-nicotinamide D-nucleotide.. Its function is as follows. DNA ligase that catalyzes the formation of phosphodiester linkages between 5'-phosphoryl and 3'-hydroxyl groups in double-stranded DNA using NAD as a coenzyme and as the energy source for the reaction. It is essential for DNA replication and repair of damaged DNA. The protein is DNA ligase of Rhizobium etli (strain CIAT 652).